The chain runs to 449 residues: Tubulin alpha-1C chain (449 aa).

The short motif at 1-4 (MREC) is the MREC motif element. Residue Q11 participates in GTP binding. K40 carries the post-translational modification N6-acetyllysine. GTP is bound by residues E71, S140, G144, T145, T179, N206, and N228. E71 contributes to the Mg(2+) binding site. The active site involves E254. Residue Y282 is modified to 3'-nitrotyrosine. Residues 429–449 (EKDYEEVGADSAEGDDEGDEY) are disordered. Over residues 431–449 (DYEEVGADSAEGDDEGDEY) the composition is skewed to acidic residues. Y432 bears the Phosphotyrosine mark. The residue at position 439 (S439) is a Phosphoserine. Y449 carries the 3'-nitrotyrosine modification.

It belongs to the tubulin family. Dimer of alpha and beta chains. A typical microtubule is a hollow water-filled tube with an outer diameter of 25 nm and an inner diameter of 15 nM. Alpha-beta heterodimers associate head-to-tail to form protofilaments running lengthwise along the microtubule wall with the beta-tubulin subunit facing the microtubule plus end conferring a structural polarity. Microtubules usually have 13 protofilaments but different protofilament numbers can be found in some organisms and specialized cells. Mg(2+) is required as a cofactor. Post-translationally, some glutamate residues at the C-terminus are polyglycylated, resulting in polyglycine chains on the gamma-carboxyl group. Glycylation is mainly limited to tubulin incorporated into axonemes (cilia and flagella) whereas glutamylation is prevalent in neuronal cells, centrioles, axonemes, and the mitotic spindle. Both modifications can coexist on the same protein on adjacent residues, and lowering polyglycylation levels increases polyglutamylation, and reciprocally. Cilia and flagella glycylation is required for their stability and maintenance. Flagella glycylation controls sperm motility. In terms of processing, some glutamate residues at the C-terminus are polyglutamylated, resulting in polyglutamate chains on the gamma-carboxyl group. Polyglutamylation plays a key role in microtubule severing by spastin (SPAST). SPAST preferentially recognizes and acts on microtubules decorated with short polyglutamate tails: severing activity by SPAST increases as the number of glutamates per tubulin rises from one to eight, but decreases beyond this glutamylation threshold. Glutamylation is also involved in cilia motility. Acetylation of alpha chains at Lys-40 is located inside the microtubule lumen. This modification has been correlated with increased microtubule stability, intracellular transport and ciliary assembly. Post-translationally, methylation of alpha chains at Lys-40 is found in mitotic microtubules and is required for normal mitosis and cytokinesis contributing to genomic stability. In terms of processing, nitration of Tyr-449 is irreversible and interferes with normal dynein intracellular distribution. Undergoes a tyrosination/detyrosination cycle, the cyclic removal and re-addition of a C-terminal tyrosine residue by the enzymes tubulin tyrosine carboxypeptidase (MATCAP1, VASH1 or VASH2) and tubulin tyrosine ligase (TTL), respectively. Post-translationally, tyrosination promotes microtubule interaction with CAP-Gly domain-containing proteins such as CLIP1, CLIP2 and DCTN1. Tyrosination regulates the initiation of dynein-dynactin motility via interaction with DCTN1, which brings the dynein-dynactin complex into contact with microtubules. In neurons, tyrosinated tubulins mediate the initiation of retrograde vesicle transport. In terms of processing, detyrosination is involved in metaphase plate congression by guiding chromosomes during mitosis: detyrosination promotes interaction with CENPE, promoting pole-proximal transport of chromosomes toward the equator. Detyrosination increases microtubules-dependent mechanotransduction in dystrophic cardiac and skeletal muscle. In cardiomyocytes, detyrosinated microtubules are required to resist to contractile compression during contraction: detyrosination promotes association with desmin (DES) at force-generating sarcomeres, leading to buckled microtubules and mechanical resistance to contraction.

Its subcellular location is the cytoplasm. It localises to the cytoskeleton. The enzyme catalyses GTP + H2O = GDP + phosphate + H(+). Functionally, tubulin is the major constituent of microtubules, a cylinder consisting of laterally associated linear protofilaments composed of alpha- and beta-tubulin heterodimers. Microtubules grow by the addition of GTP-tubulin dimers to the microtubule end, where a stabilizing cap forms. Below the cap, tubulin dimers are in GDP-bound state, owing to GTPase activity of alpha-tubulin. This Bos taurus (Bovine) protein is Tubulin alpha-1C chain (TUBA1C).